Consider the following 74-residue polypeptide: Protein SlyX homolog (74 aa).

The protein belongs to the SlyX family.

The chain is Protein SlyX homolog from Neisseria meningitidis serogroup C / serotype 2a (strain ATCC 700532 / DSM 15464 / FAM18).